The following is a 336-amino-acid chain: Spore photoproduct lyase (336 aa).

One can recognise a Radical SAM core domain in the interval 74–305; that stretch reads CKPSANYQLP…KFGQFGYGKY (232 aa). Cys-88, Cys-92, and Cys-95 together coordinate [4Fe-4S] cluster. Residues 215 to 232 constitute a DNA-binding region (H-T-H motif); that stretch reads ESAYNILNSGYKTGFIVG.

Belongs to the radical SAM superfamily. SPL family. Monomer or homodimer. [4Fe-4S] cluster serves as cofactor. The cofactor is S-adenosyl-L-methionine.

The catalysed reaction is (5R)-5,6-dihydro-5-(thymidin-7-yl)thymidine in DNA = a thymidine dimer in DNA. Involved in repair of UV radiation-induced DNA damage during spore germination. Can repair thymine dimer 5-thyminyl-5,6-dihydrothymine (known as spore photoproduct (SP)) by in situ monomerization of SP to two thymines. The polypeptide is Spore photoproduct lyase (splB) (Clostridium acetobutylicum (strain ATCC 824 / DSM 792 / JCM 1419 / IAM 19013 / LMG 5710 / NBRC 13948 / NRRL B-527 / VKM B-1787 / 2291 / W)).